The primary structure comprises 246 residues: tRNA (guanine-N(1)-)-methyltransferase (246 aa).

S-adenosyl-L-methionine-binding positions include Gly114 and 134-139 (IGDYIL).

It belongs to the RNA methyltransferase TrmD family. Homodimer.

The protein localises to the cytoplasm. It catalyses the reaction guanosine(37) in tRNA + S-adenosyl-L-methionine = N(1)-methylguanosine(37) in tRNA + S-adenosyl-L-homocysteine + H(+). Specifically methylates guanosine-37 in various tRNAs. In Coxiella burnetii (strain CbuK_Q154) (Coxiella burnetii (strain Q154)), this protein is tRNA (guanine-N(1)-)-methyltransferase.